The primary structure comprises 231 residues: Superoxide dismutase [Mn], mitochondrial (231 aa).

The N-terminal 27 residues, 1 to 27, are a transit peptide targeting the mitochondrion; that stretch reads MALRTLASRKTLAAAALPLAAAAAARG. Mn(2+)-binding residues include His-55, His-103, Asp-192, and His-196.

It belongs to the iron/manganese superoxide dismutase family. As to quaternary structure, homotetramer. It depends on Mn(2+) as a cofactor.

Its subcellular location is the mitochondrion matrix. It catalyses the reaction 2 superoxide + 2 H(+) = H2O2 + O2. Destroys superoxide anion radicals which are normally produced within the cells and which are toxic to biological systems. In Oryza sativa subsp. japonica (Rice), this protein is Superoxide dismutase [Mn], mitochondrial (SODA).